Here is a 161-residue protein sequence, read N- to C-terminus: Large ribosomal subunit protein uL10 (161 aa).

The protein belongs to the universal ribosomal protein uL10 family. In terms of assembly, part of the ribosomal stalk of the 50S ribosomal subunit. The N-terminus interacts with L11 and the large rRNA to form the base of the stalk. The C-terminus forms an elongated spine to which L12 dimers bind in a sequential fashion forming a multimeric L10(L12)X complex.

Its function is as follows. Forms part of the ribosomal stalk, playing a central role in the interaction of the ribosome with GTP-bound translation factors. The sequence is that of Large ribosomal subunit protein uL10 from Sulfurovum sp. (strain NBC37-1).